The chain runs to 205 residues: Adenylyl-sulfate kinase (205 aa).

Position 31–38 (31–38 (GLSGAGKS)) interacts with ATP. Catalysis depends on S105, which acts as the Phosphoserine intermediate.

Belongs to the APS kinase family.

The catalysed reaction is adenosine 5'-phosphosulfate + ATP = 3'-phosphoadenylyl sulfate + ADP + H(+). It functions in the pathway sulfur metabolism; hydrogen sulfide biosynthesis; sulfite from sulfate: step 2/3. In terms of biological role, catalyzes the synthesis of activated sulfate. This chain is Adenylyl-sulfate kinase, found in Shewanella sp. (strain ANA-3).